Here is a 272-residue protein sequence, read N- to C-terminus: Imidazole glycerol phosphate synthase subunit HisF (272 aa).

Residues D11 and D130 contribute to the active site.

Belongs to the HisA/HisF family. Heterodimer of HisH and HisF.

The protein localises to the cytoplasm. The catalysed reaction is 5-[(5-phospho-1-deoxy-D-ribulos-1-ylimino)methylamino]-1-(5-phospho-beta-D-ribosyl)imidazole-4-carboxamide + L-glutamine = D-erythro-1-(imidazol-4-yl)glycerol 3-phosphate + 5-amino-1-(5-phospho-beta-D-ribosyl)imidazole-4-carboxamide + L-glutamate + H(+). The protein operates within amino-acid biosynthesis; L-histidine biosynthesis; L-histidine from 5-phospho-alpha-D-ribose 1-diphosphate: step 5/9. Functionally, IGPS catalyzes the conversion of PRFAR and glutamine to IGP, AICAR and glutamate. The HisF subunit catalyzes the cyclization activity that produces IGP and AICAR from PRFAR using the ammonia provided by the HisH subunit. This Methanococcus maripaludis (strain DSM 14266 / JCM 13030 / NBRC 101832 / S2 / LL) protein is Imidazole glycerol phosphate synthase subunit HisF.